A 177-amino-acid chain; its full sequence is MSEMATIARPYAKAAFDFAVEKGELSQWAQMLTFCSEVAKNEDVAQLLDGAIASEQLAEIFISICGEQLNEFGQNFINVMAENGRLKVLPGVLEQFILLQHEFEKVIDADVTSAIELTEQQKADIGAKLEARLERKVKLNCSVDETLLAGVIIRAGDLVIDNSARGRLGRLSETLQS.

It belongs to the ATPase delta chain family. In terms of assembly, F-type ATPases have 2 components, F(1) - the catalytic core - and F(0) - the membrane proton channel. F(1) has five subunits: alpha(3), beta(3), gamma(1), delta(1), epsilon(1). F(0) has three main subunits: a(1), b(2) and c(10-14). The alpha and beta chains form an alternating ring which encloses part of the gamma chain. F(1) is attached to F(0) by a central stalk formed by the gamma and epsilon chains, while a peripheral stalk is formed by the delta and b chains.

It is found in the cell inner membrane. Functionally, f(1)F(0) ATP synthase produces ATP from ADP in the presence of a proton or sodium gradient. F-type ATPases consist of two structural domains, F(1) containing the extramembraneous catalytic core and F(0) containing the membrane proton channel, linked together by a central stalk and a peripheral stalk. During catalysis, ATP synthesis in the catalytic domain of F(1) is coupled via a rotary mechanism of the central stalk subunits to proton translocation. In terms of biological role, this protein is part of the stalk that links CF(0) to CF(1). It either transmits conformational changes from CF(0) to CF(1) or is implicated in proton conduction. The protein is ATP synthase subunit delta of Aliivibrio fischeri (strain ATCC 700601 / ES114) (Vibrio fischeri).